A 579-amino-acid polypeptide reads, in one-letter code: Mitochondrial distribution and morphology protein 36 (579 aa).

Residues 1–27 form a disordered region; that stretch reads MDENGTVKPGYELKGLNSGNSRSNMDK. S42 carries the phosphoserine modification. Disordered stretches follow at residues 378 to 401 and 446 to 518; these read TPIN…GRRL and DNKH…ESQS. The segment covering 379 to 390 has biased composition (polar residues); it reads PINSSDSDNLSN. The segment covering 446–463 has biased composition (basic and acidic residues); it reads DNKHSTKDTDSNIRRNEH. Low complexity predominate over residues 495 to 518; it reads PSQSSSRMSTLPLSPSSSLLESQS.

Functionally, involved in mitochondrial distribution and morphology. This chain is Mitochondrial distribution and morphology protein 36 (MDM36), found in Saccharomyces cerevisiae (strain ATCC 204508 / S288c) (Baker's yeast).